Consider the following 281-residue polypeptide: 2-dehydro-3-deoxyphosphooctonate aldolase (281 aa).

It belongs to the KdsA family.

It is found in the cytoplasm. It catalyses the reaction D-arabinose 5-phosphate + phosphoenolpyruvate + H2O = 3-deoxy-alpha-D-manno-2-octulosonate-8-phosphate + phosphate. Its pathway is carbohydrate biosynthesis; 3-deoxy-D-manno-octulosonate biosynthesis; 3-deoxy-D-manno-octulosonate from D-ribulose 5-phosphate: step 2/3. The protein operates within bacterial outer membrane biogenesis; lipopolysaccharide biosynthesis. In Pseudomonas paraeruginosa (strain DSM 24068 / PA7) (Pseudomonas aeruginosa (strain PA7)), this protein is 2-dehydro-3-deoxyphosphooctonate aldolase.